The sequence spans 39 residues: Contryphan-Cal3 (39 aa).

The signal sequence occupies residues methionine 1 to serine 20. Cysteine 29 and cysteine 35 are oxidised to a cystine.

In terms of tissue distribution, expressed by the venom duct.

It localises to the secreted. In terms of biological role, probable neurotoxin. This chain is Contryphan-Cal3, found in Californiconus californicus (California cone).